The chain runs to 452 residues: GPI mannosyltransferase 2 (452 aa).

At 1–7 the chain is on the cytoplasmic side; sequence MMEKVTK. Residues 8 to 28 form a helical membrane-spanning segment; that stretch reads LALTSRVMVLVVQLLANFATP. Over 29–113 the chain is Lumenal; that stretch reads DHKPDVFRMP…HLGIPLSRDA (85 aa). Residues 114–134 traverse the membrane as a helical segment; that stretch reads LILLVAVALNVLIFCKTANVL. The Cytoplasmic segment spans residues 135–161; it reads YKLTQRMFNDHNKSWNAALIFCFNPAS. The chain crosses the membrane as a helical span at residues 162-182; it reads IFFSAAYSETFFAFASFSLML. Over 183-209 the chain is Lumenal; the sequence is ECMRSEKDFRTFRLGAALTGCFVCRSN. Residues 210–230 form a helical membrane-spanning segment; it reads GLLTLGFPLYFLARHILLSTG. At 231 to 238 the chain is on the cytoplasmic side; the sequence is SVQRCWQL. A helical membrane pass occupies residues 239–259; that stretch reads FKMGLAMLVALGILHTYYFYI. Over 260–284 the chain is Lumenal; sequence YRLYCLPDVKVQHAQHVVDYAKERS. Residues 285–305 form a helical membrane-spanning segment; sequence FLISGQASVGSPWCGYTLPFP. Residues 306 to 327 lie on the Cytoplasmic side of the membrane; that stretch reads YTYVQSHYWDVGFLRYYKWKQL. The chain crosses the membrane as a helical span at residues 328 to 348; the sequence is PNFLLALPMLLFMHWHCYDYI. Over 349–370 the chain is Lumenal; that stretch reads RKLVANTWSKISPSEYQGILKE. Residues 371–391 form a helical membrane-spanning segment; it reads HISFPFVLHAAVLTLVCTLYV. Topologically, residues 392–398 are cytoplasmic; sequence HIQVSTR. A helical transmembrane segment spans residues 399–419; that stretch reads LLASATPVFYWFAADYMPNTF. Residues 420 to 426 lie on the Lumenal side of the membrane; the sequence is QLSFRSK. A helical membrane pass occupies residues 427–447; the sequence is AGVLFIWCLTYSLVGTVLFSN. The Cytoplasmic segment spans residues 448-452; sequence NYPWT.

The protein belongs to the PIGV family.

The protein resides in the endoplasmic reticulum membrane. It functions in the pathway glycolipid biosynthesis; glycosylphosphatidylinositol-anchor biosynthesis. Its function is as follows. Mannosyltransferase involved in glycosylphosphatidylinositol-anchor biosynthesis. Transfers the second mannose to the glycosylphosphatidylinositol during GPI precursor assembly. Required for the GPI-mediated endoplasmic reticulum exit and proper targeting to the cell surface of chp. Required for GPI-mediated membrane attachment of chp, qsm and Cont. Essential for microvillar stability in the rhabdomere. The chain is GPI mannosyltransferase 2 from Drosophila pseudoobscura pseudoobscura (Fruit fly).